Here is a 431-residue protein sequence, read N- to C-terminus: Phosphomethylpyrimidine synthase (431 aa).

Substrate is bound by residues N66, M95, Y124, H163, 185–187 (SRG), 226–229 (DGLR), and E265. H269 lines the Zn(2+) pocket. Y292 contacts substrate. H333 is a Zn(2+) binding site. Residues C408, C411, and C415 each contribute to the [4Fe-4S] cluster site.

The protein belongs to the ThiC family. Requires [4Fe-4S] cluster as cofactor.

It carries out the reaction 5-amino-1-(5-phospho-beta-D-ribosyl)imidazole + S-adenosyl-L-methionine = 4-amino-2-methyl-5-(phosphooxymethyl)pyrimidine + CO + 5'-deoxyadenosine + formate + L-methionine + 3 H(+). It functions in the pathway cofactor biosynthesis; thiamine diphosphate biosynthesis. Catalyzes the synthesis of the hydroxymethylpyrimidine phosphate (HMP-P) moiety of thiamine from aminoimidazole ribotide (AIR) in a radical S-adenosyl-L-methionine (SAM)-dependent reaction. This is Phosphomethylpyrimidine synthase from Dehalococcoides mccartyi (strain ATCC BAA-2100 / JCM 16839 / KCTC 5957 / BAV1).